Here is a 551-residue protein sequence, read N- to C-terminus: CTP synthase (551 aa).

The interval 1–265 (MTRYLFITGG…DHIVAEKWGL (265 aa)) is amidoligase domain. Ser13 is a CTP binding site. A UTP-binding site is contributed by Ser13. Residues 14-19 (SLGKGI) and Asp71 contribute to the ATP site. Mg(2+)-binding residues include Asp71 and Glu139. CTP contacts are provided by residues 146 to 148 (DIE), 186 to 191 (KTKPTQ), and Lys222. UTP contacts are provided by residues 186–191 (KTKPTQ) and Lys222. Positions 290–541 (TVAMVGKYVD…LRAAIAHRDG (252 aa)) constitute a Glutamine amidotransferase type-1 domain. Gly351 contacts L-glutamine. Cys378 functions as the Nucleophile; for glutamine hydrolysis in the catalytic mechanism. Residues 379 to 382 (LGMQ), Glu402, and Arg469 contribute to the L-glutamine site. Residues His514 and Glu516 contribute to the active site.

This sequence belongs to the CTP synthase family. As to quaternary structure, homotetramer.

The enzyme catalyses UTP + L-glutamine + ATP + H2O = CTP + L-glutamate + ADP + phosphate + 2 H(+). It carries out the reaction L-glutamine + H2O = L-glutamate + NH4(+). It catalyses the reaction UTP + NH4(+) + ATP = CTP + ADP + phosphate + 2 H(+). It participates in pyrimidine metabolism; CTP biosynthesis via de novo pathway; CTP from UDP: step 2/2. With respect to regulation, allosterically activated by GTP, when glutamine is the substrate; GTP has no effect on the reaction when ammonia is the substrate. The allosteric effector GTP functions by stabilizing the protein conformation that binds the tetrahedral intermediate(s) formed during glutamine hydrolysis. Inhibited by the product CTP, via allosteric rather than competitive inhibition. Functionally, catalyzes the ATP-dependent amination of UTP to CTP with either L-glutamine or ammonia as the source of nitrogen. Regulates intracellular CTP levels through interactions with the four ribonucleotide triphosphates. The polypeptide is CTP synthase (Halorhodospira halophila (strain DSM 244 / SL1) (Ectothiorhodospira halophila (strain DSM 244 / SL1))).